Reading from the N-terminus, the 333-residue chain is Complement C1q and tumor necrosis factor-related protein 9A (333 aa).

An N-terminal signal peptide occupies residues 1–19 (MRIWWLLLAIEICTGNINS). 3 consecutive Collagen-like domains span residues 24–82 (RQGH…DGKV), 95–154 (GSPG…PGPM), and 155–191 (GPIG…GEKG). The interval 24–188 (RQGHPGIPGN…GIRGWKGDRG (165 aa)) is disordered. Over residues 26–40 (GHPGIPGNPGHNGLP) the composition is skewed to low complexity. 4-hydroxyproline occurs at positions 31, 34, and 40. Basic and acidic residues predominate over residues 42–57 (RDGRDGAKGDKGDAGE). Residues Pro58, Pro61, and Pro64 each carry the 4-hydroxyproline modification. A compositionally biased stretch (basic and acidic residues) spans 69 to 88 (TSGEKGERGADGKVEAKGIK). Residues Lys73 and Lys127 each carry the 5-hydroxylysine modification. 2 O-linked (Gal...) hydroxylysine glycosylation sites follow: Lys73 and Lys127. Pro151, Pro160, and Pro175 each carry 4-hydroxyproline. Residues 197-333 (LVLPKSAFTV…FTGFLLFSSP (137 aa)) form the C1q domain.

In terms of assembly, multimers (predominantly trimers). Interacts with ADIPOQ via the C1q domain to form a heterotrimeric complex. Interacts with CTRP9B. Forms heterotrimers and heterooligomeric complexes with CTRP9B. Expressed predominantly in adipose tissue.

The protein resides in the secreted. Probable adipokine. Activates AMPK, AKT, and p44/42 MAPK signaling pathways. The protein is Complement C1q and tumor necrosis factor-related protein 9A (C1QTNF9) of Homo sapiens (Human).